The sequence spans 21 residues: Bibrotoxin (21 aa).

2 disulfide bridges follow: Cys1-Cys15 and Cys3-Cys11.

It belongs to the endothelin/sarafotoxin family. In terms of tissue distribution, expressed by the venom gland.

It is found in the secreted. Vasoconstrictor activity. These toxins cause cardiac arrest probably as a result of coronary vasospasm. May act by displaying agonistic activities towards endothelin-1 and -2 receptors (EDNRA and EDNRB). This Atractaspis bibronii (Bibron's mole viper) protein is Bibrotoxin.